Here is a 37-residue protein sequence, read N- to C-terminus: Large ribosomal subunit protein bL36 (37 aa).

Belongs to the bacterial ribosomal protein bL36 family.

This chain is Large ribosomal subunit protein bL36, found in Paracidovorax citrulli (strain AAC00-1) (Acidovorax citrulli).